Reading from the N-terminus, the 149-residue chain is Large ribosomal subunit protein uL15 (149 aa).

Residues 1 to 57 form a disordered region; the sequence is MRLNDPKPKTGSQHRRRRVGRGIAAGQGASCGFGMRGQKSRSGRPTRPGFEGGQNPL. Positions 23 to 35 are enriched in gly residues; the sequence is IAAGQGASCGFGM.

This sequence belongs to the universal ribosomal protein uL15 family. In terms of assembly, part of the 50S ribosomal subunit.

In terms of biological role, binds to the 23S rRNA. This chain is Large ribosomal subunit protein uL15, found in Acaryochloris marina (strain MBIC 11017).